We begin with the raw amino-acid sequence, 75 residues long: Protease B inhibitor 2 (75 aa).

Residue threonine 74 is modified to Phosphothreonine.

The protein belongs to the protease inhibitor I9 family. In terms of assembly, part of the heterodimeric LMA1 complex together with the thioredoxin II/TRX2. LMA1 binds to the ATPase SEC18.

It localises to the cytoplasm. In terms of biological role, cytosolic inhibitor of vacuolar proteinase B (yscB), probably regulating protease B activity during limited proteolysis. PBI2 is a component of the LMA1 complex, which is involved in the facilitation of vesicle fusion such as homotypic vacuole and ER-derived COPII vesicle fusion with the Golgi. In Saccharomyces cerevisiae (strain ATCC 204508 / S288c) (Baker's yeast), this protein is Protease B inhibitor 2 (PBI2).